The primary structure comprises 330 residues: Inactive hydroxysteroid dehydrogenase-like protein 1 (330 aa).

Ala2 carries the post-translational modification N-acetylalanine. The segment at 2–82 (AAVDSFYLLY…SGATDGIGKA (81 aa)) is required for mitochondria translocation. NADP(+)-binding positions include 74–80 (GATDGIG), Asp125, and Lys222.

The protein belongs to the short-chain dehydrogenases/reductases (SDR) family. 17-beta-HSD 3 subfamily. Interacts with STYXL1.

It is found in the mitochondrion. This is Inactive hydroxysteroid dehydrogenase-like protein 1 (Hsdl1) from Mus musculus (Mouse).